The primary structure comprises 704 residues: Elongation factor G (704 aa).

One can recognise a tr-type G domain in the interval 8-290 (EKYRNIGICA…GVVRYLPAPN (283 aa)). Residues 17–24 (AHVDAGKT), 88–92 (DTPGH), and 142–145 (NKMD) contribute to the GTP site.

The protein belongs to the TRAFAC class translation factor GTPase superfamily. Classic translation factor GTPase family. EF-G/EF-2 subfamily.

It localises to the cytoplasm. Functionally, catalyzes the GTP-dependent ribosomal translocation step during translation elongation. During this step, the ribosome changes from the pre-translocational (PRE) to the post-translocational (POST) state as the newly formed A-site-bound peptidyl-tRNA and P-site-bound deacylated tRNA move to the P and E sites, respectively. Catalyzes the coordinated movement of the two tRNA molecules, the mRNA and conformational changes in the ribosome. The sequence is that of Elongation factor G from Francisella tularensis subsp. holarctica (strain FTNF002-00 / FTA).